Consider the following 297-residue polypeptide: MFRSGFIHNTRFNFSKVTTKRLFSSSARPIHSLRIKSLTLGVCGFSAITGLALYNHRLIELDNKKQDISPNISIAVDSSISPFPTALISANQTNLNTDFQLLGYGVRSVTFVNFKVYGIGLYIANDDVNKTKKILSPNYLSTFGTENHSLRELLSDPEFSAQLISKLLEENVRFAVRISPVRNTDFNHLKDGLIKSILAHPESKENKEIVSNGLEELRNVFSGYRGSVPKNHVLWLEILKQGSLSISYENPVKNELTSMGQVKEPIISKLLFLQYLSGKKPLSEPLRKSCNDGFIGL.

A mitochondrion-targeting transit peptide spans 1–35 (MFRSGFIHNTRFNFSKVTTKRLFSSSARPIHSLRI).

It belongs to the AIM18/AIM46 family.

The protein resides in the mitochondrion. This chain is Altered inheritance of mitochondria protein 18, mitochondrial (AIM18), found in Debaryomyces hansenii (strain ATCC 36239 / CBS 767 / BCRC 21394 / JCM 1990 / NBRC 0083 / IGC 2968) (Yeast).